The chain runs to 416 residues: D-amino acid dehydrogenase (416 aa).

3–17 lines the FAD pocket; the sequence is VIVLGAGIIGVTSAY.

Belongs to the DadA oxidoreductase family. FAD is required as a cofactor.

The enzyme catalyses a D-alpha-amino acid + A + H2O = a 2-oxocarboxylate + AH2 + NH4(+). The protein operates within amino-acid degradation; D-alanine degradation; NH(3) and pyruvate from D-alanine: step 1/1. Functionally, oxidative deamination of D-amino acids. This chain is D-amino acid dehydrogenase, found in Sinorhizobium medicae (strain WSM419) (Ensifer medicae).